We begin with the raw amino-acid sequence, 86 residues long: uncharacterized protein (86 aa).

3 consecutive transmembrane segments (helical) span residues 4-24 (ILII…IAAV), 34-54 (MGLV…ILIN), and 64-84 (DIAY…ARVL).

The protein to M.jannaschii MJ1223.

It localises to the cell membrane. This is an uncharacterized protein from Methanothermobacter thermautotrophicus (strain ATCC 29096 / DSM 1053 / JCM 10044 / NBRC 100330 / Delta H) (Methanobacterium thermoautotrophicum).